The chain runs to 444 residues: Glutamate--tRNA ligase 2 (444 aa).

The 'HIGH' region motif lies at 8–18 (PSPTGHLHAGN). The short motif at 241-245 (KLSKR) is the 'KMSKS' region element. Lysine 244 is an ATP binding site.

It belongs to the class-I aminoacyl-tRNA synthetase family. Glutamate--tRNA ligase type 1 subfamily. As to quaternary structure, monomer.

It localises to the cytoplasm. It catalyses the reaction tRNA(Glu) + L-glutamate + ATP = L-glutamyl-tRNA(Glu) + AMP + diphosphate. In terms of biological role, catalyzes the attachment of glutamate to tRNA(Glu) in a two-step reaction: glutamate is first activated by ATP to form Glu-AMP and then transferred to the acceptor end of tRNA(Glu). This is Glutamate--tRNA ligase 2 from Acidiphilium cryptum (strain JF-5).